The following is a 182-amino-acid chain: Adenine phosphoribosyltransferase (182 aa).

The protein belongs to the purine/pyrimidine phosphoribosyltransferase family. In terms of assembly, homodimer.

It localises to the cytoplasm. It carries out the reaction AMP + diphosphate = 5-phospho-alpha-D-ribose 1-diphosphate + adenine. It participates in purine metabolism; AMP biosynthesis via salvage pathway; AMP from adenine: step 1/1. In terms of biological role, catalyzes a salvage reaction resulting in the formation of AMP, that is energically less costly than de novo synthesis. The chain is Adenine phosphoribosyltransferase from Campylobacter jejuni subsp. jejuni serotype O:23/36 (strain 81-176).